Consider the following 468-residue polypeptide: ATP synthase subunit beta (468 aa).

Position 155–162 (155–162) interacts with ATP; that stretch reads GGAGVGKT.

Belongs to the ATPase alpha/beta chains family. As to quaternary structure, F-type ATPases have 2 components, CF(1) - the catalytic core - and CF(0) - the membrane proton channel. CF(1) has five subunits: alpha(3), beta(3), gamma(1), delta(1), epsilon(1). CF(0) has three main subunits: a(1), b(2) and c(9-12). The alpha and beta chains form an alternating ring which encloses part of the gamma chain. CF(1) is attached to CF(0) by a central stalk formed by the gamma and epsilon chains, while a peripheral stalk is formed by the delta and b chains.

It is found in the cell membrane. The catalysed reaction is ATP + H2O + 4 H(+)(in) = ADP + phosphate + 5 H(+)(out). Produces ATP from ADP in the presence of a proton gradient across the membrane. The catalytic sites are hosted primarily by the beta subunits. In Streptococcus pneumoniae (strain CGSP14), this protein is ATP synthase subunit beta.